Consider the following 551-residue polypeptide: Delta-selinene synthase TPS7FN (551 aa).

Residues Arg-266, Asp-303, Asp-307, Arg-444, and Asp-447 each contribute to the (2E,6E)-farnesyl diphosphate site. 2 residues coordinate Mg(2+): Asp-303 and Asp-307. Residues 303 to 307 (DDIYD) carry the DDXXD motif motif. Residues Asp-447, Ser-451, and Glu-455 each contribute to the Mg(2+) site.

It belongs to the terpene synthase family. Tpsb subfamily. Mg(2+) is required as a cofactor. The cofactor is Mn(2+).

The catalysed reaction is (2E,6E)-farnesyl diphosphate = delta-selinene + diphosphate. It carries out the reaction (2E)-geranyl diphosphate = beta-myrcene + diphosphate. The enzyme catalyses (2E)-geranyl diphosphate = (4S)-limonene + diphosphate. It catalyses the reaction (2E,6E)-farnesyl diphosphate + H2O = selina-6-en-4-ol + diphosphate. The protein operates within secondary metabolite biosynthesis; terpenoid biosynthesis. Involved in sesquiterpene olefins biosynthesis, constituants of cannabinoids and terpenoids-rich resins. Catalyzes mainly the conversion of (2E)-farnesyl diphosphate to delta-selinene, and also produces minor products such as selina-6-en-4-ol. Can also use (2E)-geranyl diphosphate as substrate with low efficiency, producing minor amounts of myrcene and limonene. This chain is Delta-selinene synthase TPS7FN, found in Cannabis sativa (Hemp).